A 134-amino-acid polypeptide reads, in one-letter code: MSRMYETIYIVQPDLGDEEIKALSTKVQDVIASMNGDFKRVEDWGTRKLAYPINKNPRGRYFYLRFDGDSGLIAELERRLRLDDKVIRYQSVKLETEVVAPAAAPVKSAEEGTEEVAAEAATEAPAETTTTVEG.

The tract at residues 103–134 (AAPVKSAEEGTEEVAAEAATEAPAETTTTVEG) is disordered. Positions 118 to 134 (AEAATEAPAETTTTVEG) are enriched in low complexity.

This sequence belongs to the bacterial ribosomal protein bS6 family.

Functionally, binds together with bS18 to 16S ribosomal RNA. This is Small ribosomal subunit protein bS6 from Citrifermentans bemidjiense (strain ATCC BAA-1014 / DSM 16622 / JCM 12645 / Bem) (Geobacter bemidjiensis).